A 487-amino-acid chain; its full sequence is N-succinylglutamate 5-semialdehyde dehydrogenase (487 aa).

221-226 (GSSDTG) contacts NAD(+). Catalysis depends on residues Glu244 and Cys278.

The protein belongs to the aldehyde dehydrogenase family. AstD subfamily.

It carries out the reaction N-succinyl-L-glutamate 5-semialdehyde + NAD(+) + H2O = N-succinyl-L-glutamate + NADH + 2 H(+). It participates in amino-acid degradation; L-arginine degradation via AST pathway; L-glutamate and succinate from L-arginine: step 4/5. Its function is as follows. Catalyzes the NAD-dependent reduction of succinylglutamate semialdehyde into succinylglutamate. The chain is N-succinylglutamate 5-semialdehyde dehydrogenase from Burkholderia pseudomallei (strain 1106a).